We begin with the raw amino-acid sequence, 491 residues long: Katanin p60 ATPase-containing subunit A1 (491 aa).

Residues Met1–Tyr29 are interaction with KATNB1. The tract at residues Met1–Ser75 is interaction with dynein and NDEL1. The interaction with microtubules stretch occupies residues Met1–Thr185. Ser42 bears the Phosphoserine; by DYRK2 mark. Residues Gln87 to Asp183 are disordered. A compositionally biased stretch (basic and acidic residues) spans His145–Lys169. Residue Gly249–Thr256 coordinates ATP.

This sequence belongs to the AAA ATPase family. Katanin p60 subunit A1 subfamily. As to quaternary structure, can homooligomerize into hexameric rings, which may be promoted by interaction with microtubules. Interacts with KATNB1, which may serve as a targeting subunit. Interacts with ASPM; the katanin complex formation KATNA1:KATNB1 is required for the association of ASPM. Interacts with dynein and NDEL1. Associates with the E3 ligase complex containing DYRK2, EDD/UBR5, DDB1 and DCAF1 proteins (EDVP complex). Interacts with KLHL42 (via the kelch domains). Interacts with CUL3; the interaction is enhanced by KLHL42. Interacts with KATNB1 and KATNBL1. Post-translationally, phosphorylation by DYRK2 triggers ubiquitination and subsequent degradation. In terms of processing, ubiquitinated by the BCR(KLHL42) E3 ubiquitin ligase complex, leading to its proteasomal degradation. Ubiquitinated by the EDVP E3 ligase complex and subsequently targeted for proteasomal degradation.

The protein resides in the cytoplasm. The protein localises to the midbody. It localises to the cytoskeleton. Its subcellular location is the microtubule organizing center. It is found in the centrosome. The protein resides in the spindle pole. The protein localises to the spindle. The enzyme catalyses n ATP + n H2O + a microtubule = n ADP + n phosphate + (n+1) alpha/beta tubulin heterodimers.. ATPase activity is stimulated by microtubules, which promote homooligomerization. ATP-dependent microtubule severing is stimulated by interaction with KATNB1. Catalytic subunit of a complex which severs microtubules in an ATP-dependent manner. Microtubule severing may promote rapid reorganization of cellular microtubule arrays and the release of microtubules from the centrosome following nucleation. Microtubule release from the mitotic spindle poles may allow depolymerization of the microtubule end proximal to the spindle pole, leading to poleward microtubule flux and poleward motion of chromosome. Microtubule release within the cell body of neurons may be required for their transport into neuronal processes by microtubule-dependent motor proteins. This transport is required for axonal growth. In Rattus norvegicus (Rat), this protein is Katanin p60 ATPase-containing subunit A1 (Katna1).